Consider the following 189-residue polypeptide: Peptidyl-tRNA hydrolase (189 aa).

TRNA is bound at residue His-14. The active-site Proton acceptor is His-19. TRNA is bound by residues Tyr-64, Asn-66, and Asn-112.

Belongs to the PTH family. Monomer.

The protein localises to the cytoplasm. The catalysed reaction is an N-acyl-L-alpha-aminoacyl-tRNA + H2O = an N-acyl-L-amino acid + a tRNA + H(+). Functionally, hydrolyzes ribosome-free peptidyl-tRNAs (with 1 or more amino acids incorporated), which drop off the ribosome during protein synthesis, or as a result of ribosome stalling. Catalyzes the release of premature peptidyl moieties from peptidyl-tRNA molecules trapped in stalled 50S ribosomal subunits, and thus maintains levels of free tRNAs and 50S ribosomes. The chain is Peptidyl-tRNA hydrolase from Chlorobium phaeobacteroides (strain BS1).